We begin with the raw amino-acid sequence, 286 residues long: Phosphoribosylaminoimidazole-succinocarboxamide synthase (286 aa).

The protein belongs to the SAICAR synthetase family.

It catalyses the reaction 5-amino-1-(5-phospho-D-ribosyl)imidazole-4-carboxylate + L-aspartate + ATP = (2S)-2-[5-amino-1-(5-phospho-beta-D-ribosyl)imidazole-4-carboxamido]succinate + ADP + phosphate + 2 H(+). Its pathway is purine metabolism; IMP biosynthesis via de novo pathway; 5-amino-1-(5-phospho-D-ribosyl)imidazole-4-carboxamide from 5-amino-1-(5-phospho-D-ribosyl)imidazole-4-carboxylate: step 1/2. In Histophilus somni (strain 2336) (Haemophilus somnus), this protein is Phosphoribosylaminoimidazole-succinocarboxamide synthase.